We begin with the raw amino-acid sequence, 128 residues long: Flagellar basal body rod protein FlgB (128 aa).

The protein belongs to the flagella basal body rod proteins family. As to quaternary structure, the basal body constitutes a major portion of the flagellar organelle and consists of a number of rings mounted on a central rod. In Gram-negative bacteria, at least four rings, L, P, S and M are present, whereas Gram-positive bacteria lack the L and P rings. The rod consists of about 26 subunits of FlgG in the distal portion, and FlgB, FlgC and FlgF build up the proximal portion of the rod with about 6 subunits each. Rod assembly occurs by export via the flagellum-specific pathway of its constituent proteins and by their incorporation into the rod structure in the probable order of FlgB, FlgC, FlgF and FlgG. Another protein, FliE, also assembles onto the stable rod structure.

It is found in the bacterial flagellum basal body. Structural component of flagellum, the bacterial motility apparatus. Part of the rod structure of flagellar basal body. The sequence is that of Flagellar basal body rod protein FlgB from Cereibacter sphaeroides (Rhodobacter sphaeroides).